A 266-amino-acid chain; its full sequence is Integral membrane protein 2B (266 aa).

The Cytoplasmic segment spans residues Met-1–Cys-54. Residues Trp-55–Leu-75 form a helical; Signal-anchor for type II membrane protein membrane-spanning segment. Residues Tyr-76–Ser-266 lie on the Lumenal side of the membrane. A necessary for interaction with APP and inhibitor effects on APP processing region spans residues Glu-102–Val-134. The BRICHOS domain maps to Phe-137–Leu-231. Cystine bridges form between Cys-164–Cys-223 and Cys-248–Cys-265. The N-linked (GlcNAc...) asparagine glycan is linked to Asn-170.

This sequence belongs to the ITM2 family. As to quaternary structure, homodimer; disulfide-linked. Interacts with SPPL2A and SPPL2B. Interacts with APP. Mature BRI2 (mBRI2) interacts with the APP amyloid-beta A4 protein; the interaction occurs at the cell surface and in the endocytic compartments and enable alpha- and beta-secretase-induced APP cleavage inhibition. Mature BRI2 (mBRI2) interacts with the APP C99; the interaction occurs in the endocytic compartments and enable gamma-secretase-induced C99 cleavage inhibition. May form heterodimers with Bri23 peptide and APP amyloid-beta protein 40. Interacts with ADAM7 in sperm; the interaction increases following capacitation. The ectodomain C-terminal part of the imBRI2 is processed by furin producing a secreted Bri23 peptide and a mature BRI2, membrane form (mBRI2). The remaining part of the ectodomain of mBRI2 containing the BRICHOS domain is cleaved by ADAM10 and is secreted (BRI2C, soluble form). The membrane-bound N-terminal fragment (BRI2C, membrane form) is further proteolytically processed by SPPL2A and SPPL2B through regulated intramembrane proteolysis producing a secreted C-peptide and a BRI2 intracellular domain (BRI2 ICD) released in the cytosol. Shedding by ADAM10 facilitates intramembrane cleavage but is not absolutely required for BRI2 ICD generation. Post-translationally, glycosylation at Asn-170 is important for cell surface localization, but doesn't affect furin- and ADAM10-induced proteolytic processing.

The protein localises to the golgi apparatus membrane. It localises to the cell membrane. It is found in the endosome membrane. The protein resides in the secreted. Its function is as follows. Plays a regulatory role in the processing of the amyloid-beta A4 precursor protein (APP) and acts as an inhibitor of the amyloid-beta peptide aggregation and fibrils deposition. Plays a role in the induction of neurite outgrowth. Functions as a protease inhibitor by blocking access of secretases to APP cleavage sites. Functionally, mature BRI2 (mBRI2) functions as a modulator of the amyloid-beta A4 precursor protein (APP) processing leading to a strong reduction in the secretion of secretase-processed amyloid-beta protein 40 and amyloid-beta protein 42. In terms of biological role, bri23 peptide prevents aggregation of APP amyloid-beta protein 42 into toxic oligomers. This Sus scrofa (Pig) protein is Integral membrane protein 2B (ITM2B).